The primary structure comprises 646 residues: Lipoteichoic acid synthase (646 aa).

The Cytoplasmic segment spans residues Met-1–Lys-7. Residues Leu-8–Ser-28 form a helical membrane-spanning segment. Residues Tyr-29–Asn-43 are Extracellular-facing. The helical transmembrane segment at Leu-44 to Phe-64 threads the bilayer. Residues Lys-65–Lys-68 lie on the Cytoplasmic side of the membrane. The helical transmembrane segment at Ala-69–Val-89 threads the bilayer. The Extracellular portion of the chain corresponds to Tyr-90–Ser-119. Residues Phe-120 to Phe-140 traverse the membrane as a helical segment. Residues Lys-141–Lys-153 lie on the Cytoplasmic side of the membrane. Residues Phe-154–Glu-174 traverse the membrane as a helical segment. At Ser-175–Lys-646 the chain is on the extracellular side. Mn(2+) contacts are provided by Glu-255 and Thr-300. Thr-300 is an active-site residue. His-416 provides a ligand contact to substrate. 2 residues coordinate Mn(2+): Asp-475 and His-476. Residues Ile-579 to Lys-646 form a disordered region. 2 stretches are compositionally biased toward basic and acidic residues: residues Tyr-580–Gln-607 and Asp-625–Lys-646.

This sequence belongs to the LTA synthase family. In terms of processing, proteolytically cleaved.

Its subcellular location is the cell membrane. It localises to the secreted. It participates in cell wall biogenesis; lipoteichoic acid biosynthesis. Functionally, catalyzes the polymerization of lipoteichoic acid (LTA) polyglycerol phosphate, a reaction that presumably uses phosphatidylglycerol (PG) as substrate. Is required for staphylococcal growth and cell division process. In Staphylococcus saprophyticus subsp. saprophyticus (strain ATCC 15305 / DSM 20229 / NCIMB 8711 / NCTC 7292 / S-41), this protein is Lipoteichoic acid synthase (ltaS).